We begin with the raw amino-acid sequence, 254 residues long: Very-long-chain (3R)-3-hydroxyacyl-CoA dehydratase 2 (254 aa).

The span at 1-10 (MAAAAATAAT) shows a compositional bias: low complexity. The segment at 1–34 (MAAAAATAATKGNGGGSGRVGAGDSSGARKKKGP) is disordered. Ala-2 carries the post-translational modification N-acetylalanine. Over 2–41 (AAAAATAATKGNGGGSGRVGAGDSSGARKKKGPGPVATAY) the chain is Cytoplasmic. Positions 12–21 (GNGGGSGRVG) are enriched in gly residues. The helical transmembrane segment at 42 to 60 (LVIYNVVMTAGWLVIAVGL) threads the bilayer. The Lumenal portion of the chain corresponds to 61-79 (VRAYLAKGSYHSLYYSIER). Residues 80 to 97 (PLKFFQTGALLEILHCAI) traverse the membrane as a helical segment. At 98 to 107 (GIVPSSVVLT) the chain is on the cytoplasmic side. Residues 108–125 (SFQVMSRVFLIWAVTHSV) traverse the membrane as a helical segment. The Lumenal segment spans residues 126 to 130 (KEVQS). A helical transmembrane segment spans residues 131-146 (EDSVLLFVIAWTITEI). Topologically, residues 147–169 (IRYSFYTFSLLNHLPYIIKWARY) are cytoplasmic. The helical transmembrane segment at 170 to 187 (TLFIVLYPMGVTGELLTI) threads the bilayer. Residues Tyr-176 and Glu-183 contribute to the active site. Residues 188-217 (YAALPFVRQAGLYSISLPNKYNFSFDYHAF) lie on the Lumenal side of the membrane. A may be involved in interaction with TECR region spans residues 198-214 (GLYSISLPNKYNFSFDY). N-linked (GlcNAc...) asparagine glycosylation is present at Asn-209. A helical transmembrane segment spans residues 218–235 (LILIMISYIPLFPQLYFH). Topologically, residues 236–254 (MIHQRRKVLSHTEEHKKFE) are cytoplasmic.

The protein belongs to the very long-chain fatty acids dehydratase HACD family. In terms of assembly, may interact with enzymes of the ELO family (including ELOVL1); with those enzymes that mediate condensation, the first of the four steps of the reaction cycle responsible for fatty acids elongation, may be part of a larger fatty acids elongase complex. Interacts with BCAP31. Interacts with TECR.

The protein resides in the endoplasmic reticulum membrane. The enzyme catalyses a very-long-chain (3R)-3-hydroxyacyl-CoA = a very-long-chain (2E)-enoyl-CoA + H2O. It catalyses the reaction (3R)-hydroxyhexadecanoyl-CoA = (2E)-hexadecenoyl-CoA + H2O. It carries out the reaction (3R)-hydroxyoctadecanoyl-CoA = (2E)-octadecenoyl-CoA + H2O. The catalysed reaction is (3R)-hydroxyeicosanoyl-CoA = (2E)-eicosenoyl-CoA + H2O. The enzyme catalyses (3R)-hydroxydocosanoyl-CoA = (2E)-docosenoyl-CoA + H2O. It catalyses the reaction (3R)-hydroxytetracosanoyl-CoA = (2E)-tetracosenoyl-CoA + H2O. It carries out the reaction (3R)-hydroxyhexacosanoyl-CoA = (2E)-hexacosenoyl-CoA + H2O. It functions in the pathway lipid metabolism; fatty acid biosynthesis. Catalyzes the third of the very long-chain fatty acids (VLCFA) elongation four-step cycle (condensation, reduction, dehydration, and reduction). This endoplasmic reticulum-elongation process is characterized by the addition of two carbons to the lipid chain through each cycle. This enzyme catalyzes the dehydration of the 3-hydroxyacyl-CoA intermediate into trans-2,3-enoyl-CoA, within each cycle of elongation. Therefore, it participates in the production of various VLCFAs involved in multiple biological processes as precursors of membrane lipids and lipid mediators. The protein is Very-long-chain (3R)-3-hydroxyacyl-CoA dehydratase 2 of Mus musculus (Mouse).